The following is a 216-amino-acid chain: Cytochrome c biogenesis ATP-binding export protein CcmA (216 aa).

Positions 11–216 constitute an ABC transporter domain; sequence LSANELTCIR…RKITLDYRFV (206 aa). 43–50 is an ATP binding site; the sequence is GPNGAGKT.

The protein belongs to the ABC transporter superfamily. CcmA exporter (TC 3.A.1.107) family. The complex is composed of two ATP-binding proteins (CcmA) and two transmembrane proteins (CcmB).

The protein resides in the cell inner membrane. The enzyme catalyses heme b(in) + ATP + H2O = heme b(out) + ADP + phosphate + H(+). Part of the ABC transporter complex CcmAB involved in the biogenesis of c-type cytochromes; once thought to export heme, this seems not to be the case, but its exact role is uncertain. Responsible for energy coupling to the transport system. The polypeptide is Cytochrome c biogenesis ATP-binding export protein CcmA (Shewanella frigidimarina (strain NCIMB 400)).